The following is a 101-amino-acid chain: NADH-ubiquinone oxidoreductase chain 5 (101 aa).

3 consecutive transmembrane segments (helical) span residues Ile12–Ile32, Phe48–Phe68, and Leu79–Ile99.

Belongs to the complex I subunit 5 family.

It localises to the mitochondrion inner membrane. It catalyses the reaction a ubiquinone + NADH + 5 H(+)(in) = a ubiquinol + NAD(+) + 4 H(+)(out). Functionally, core subunit of the mitochondrial membrane respiratory chain NADH dehydrogenase (Complex I) that is believed to belong to the minimal assembly required for catalysis. Complex I functions in the transfer of electrons from NADH to the respiratory chain. The immediate electron acceptor for the enzyme is believed to be ubiquinone. The polypeptide is NADH-ubiquinone oxidoreductase chain 5 (ND5) (Leishmania tarentolae (Sauroleishmania tarentolae)).